Consider the following 166-residue polypeptide: MYSMQLASCVTLTLVLLVNSAPTSSPTSSSTSSSTAEAQQQQQHLEQLLMDLQELLSRMENYRNLKLPRMLTFKFYLPKQATELKDLQCLEDELGPLQSVLDLTQSKSFQLEDAENFISNIRVTVVKLKGSDNTIECQFDDESATVVDFLRRWIAFCQSIISTSPQ.

Positions 1 to 20 are cleaved as a signal peptide; that stretch reads MYSMQLASCVTLTLVLLVNS. O-linked (GalNAc...) threonine glycosylation occurs at T23. An intrachain disulfide couples C89 to C137.

Belongs to the IL-2 family.

The protein localises to the secreted. In terms of biological role, cytokine produced by activated CD4-positive helper T-cells and to a lesser extend activated CD8-positive T-cells and natural killer (NK) cells that plays pivotal roles in the immune response and tolerance. Binds to a receptor complex composed of either the high-affinity trimeric IL-2R (IL2RA/CD25, IL2RB/CD122 and IL2RG/CD132) or the low-affinity dimeric IL-2R (IL2RB and IL2RG). Interaction with the receptor leads to oligomerization and conformation changes in the IL-2R subunits resulting in downstream signaling starting with phosphorylation of JAK1 and JAK3. In turn, JAK1 and JAK3 phosphorylate the receptor to form a docking site leading to the phosphorylation of several substrates including STAT5. This process leads to activation of several pathways including STAT, phosphoinositide-3-kinase/PI3K and mitogen-activated protein kinase/MAPK pathways. Functions as a T-cell growth factor and can increase NK-cell cytolytic activity as well. Promotes strong proliferation of activated B-cells and subsequently immunoglobulin production. Plays a pivotal role in regulating the adaptive immune system by controlling the survival and proliferation of regulatory T-cells, which are required for the maintenance of immune tolerance. Moreover, participates in the differentiation and homeostasis of effector T-cell subsets, including Th1, Th2, Th17 as well as memory CD8-positive T-cells. In Mus spretus (Western Mediterranean mouse), this protein is Interleukin-2 (Il2).